Reading from the N-terminus, the 137-residue chain is MQLTIKWLHLSVDGETCPRCSETGKELLKAVNTLKEFLSPLGFEVVFEEVELTPEDFSRDPFKSNEVWINGRLLEDWIGAKVTQTPCCDVCGDQECRALEVDQQLQEVVKADLVVKAALMAVAELKTSCCSETSCCD.

This is an uncharacterized protein from Archaeoglobus fulgidus (strain ATCC 49558 / DSM 4304 / JCM 9628 / NBRC 100126 / VC-16).